The primary structure comprises 143 residues: MIFNCGILFRKELKDFPCELGLLLVGDSDMRKINRLRRGKDKTTDVLSFPLEFDSAPLQNVLQKRTGFDSNSLPPIALGEIVISVDTLEKQAVEIGHSVKDEFYRLLVHGFLHLLGYDHERGEEEERIMKLKEDECLEILQEL.

Zn(2+) is bound by residues H109, H113, and H119.

This sequence belongs to the endoribonuclease YbeY family. Zn(2+) serves as cofactor.

The protein resides in the cytoplasm. In terms of biological role, single strand-specific metallo-endoribonuclease involved in late-stage 70S ribosome quality control and in maturation of the 3' terminus of the 16S rRNA. This Leptospira borgpetersenii serovar Hardjo-bovis (strain JB197) protein is Endoribonuclease YbeY.